A 715-amino-acid chain; its full sequence is Nucleolar complex protein 2 homolog (715 aa).

Disordered stretches follow at residues 17 to 71, 85 to 132, and 638 to 715; these read SKRI…HKLD, FLQQ…DKTK, and ERSA…SDED. Residues 89–128 are compositionally biased toward acidic residues; it reads EDADLLNMEDDGDDDEDDDEDDEDEEEEESDDDEDDEEDD. The segment covering 638-660 has biased composition (basic and acidic residues); sequence ERSAVENSKKDDKKKKKEEEAAA.

The protein belongs to the NOC2 family.

Its subcellular location is the nucleus. Functionally, required for normal somatic gonad development and for regulation of germline development and proliferation. This chain is Nucleolar complex protein 2 homolog (pro-2), found in Caenorhabditis elegans.